The primary structure comprises 131 residues: NADH-quinone oxidoreductase subunit I 2 (131 aa).

4Fe-4S ferredoxin-type domains lie at 42–71 (LKVS…VEAG) and 81–110 (ERYE…MTGE). The [4Fe-4S] cluster site is built by cysteine 51, cysteine 54, cysteine 57, cysteine 61, cysteine 90, cysteine 93, cysteine 96, and cysteine 100.

It belongs to the complex I 23 kDa subunit family. In terms of assembly, NDH-1 is composed of 14 different subunits. Subunits NuoA, H, J, K, L, M, N constitute the membrane sector of the complex. It depends on [4Fe-4S] cluster as a cofactor.

Its subcellular location is the cell inner membrane. It carries out the reaction a quinone + NADH + 5 H(+)(in) = a quinol + NAD(+) + 4 H(+)(out). Functionally, NDH-1 shuttles electrons from NADH, via FMN and iron-sulfur (Fe-S) centers, to quinones in the respiratory chain. The immediate electron acceptor for the enzyme in this species is believed to be ubiquinone. Couples the redox reaction to proton translocation (for every two electrons transferred, four hydrogen ions are translocated across the cytoplasmic membrane), and thus conserves the redox energy in a proton gradient. This is NADH-quinone oxidoreductase subunit I 2 from Geobacter metallireducens (strain ATCC 53774 / DSM 7210 / GS-15).